The chain runs to 496 residues: RNA-binding motif protein, Y chromosome, family 1 member F/J (496 aa).

Residues 8-85 (GKLFIGGLNR…KAIKVEQAKK (78 aa)) enclose the RRM domain. Disordered regions lie at residues 81–345 (EQAK…YAPP) and 452–496 (KDQR…SSRY). Composition is skewed to low complexity over residues 97-114 (PASSRNRSPSGSLRSARG) and 149-159 (PVKRGPSSRSG). Over residues 175-184 (NSWMGSQGPM) the composition is skewed to polar residues. Composition is skewed to basic and acidic residues over residues 204–214 (RNDRMSTRHDG), 242–253 (DNGHSNRDEHSS), 276–289 (AYRDYGHSRRDESY), 313–326 (GYRDYGHSRRHESY), 335–345 (SSRETRDYAPP), and 484–496 (GESRSEKGDSSRY).

In terms of assembly, interacts with splicing factor proteins SFRS3/SRP20, TRA2B/SFRS10, KHDRBS1/SAM68 and KHDRBS3. Testis-specific.

It localises to the nucleus. Functionally, RNA-binding protein which may be involved in spermatogenesis. Required for sperm development, possibly by participating in pre-mRNA splicing in the testis. The protein is RNA-binding motif protein, Y chromosome, family 1 member F/J (RBMY1F) of Homo sapiens (Human).